The sequence spans 349 residues: Galactose-1-phosphate uridylyltransferase (349 aa).

Position 29–32 (29–32 (RAKR)) interacts with UDP-alpha-D-glucose. The Zn(2+) site is built by C53 and C56. A UDP-alpha-D-glucose-binding site is contributed by 78 to 79 (ND). Residue H116 participates in Zn(2+) binding. Residues N154 and 160 to 162 (GCS) each bind UDP-alpha-D-glucose. H165 provides a ligand contact to Zn(2+). Residue H167 is the Tele-UMP-histidine intermediate of the active site. Q169 lines the UDP-alpha-D-glucose pocket. Fe cation-binding residues include E183, H282, H297, and H299. UDP-alpha-D-glucose-binding positions include 312–313 (KF), 317–318 (YE), and Q324.

It belongs to the galactose-1-phosphate uridylyltransferase type 1 family. The cofactor is Zn(2+).

It carries out the reaction alpha-D-galactose 1-phosphate + UDP-alpha-D-glucose = alpha-D-glucose 1-phosphate + UDP-alpha-D-galactose. Its pathway is carbohydrate metabolism; galactose metabolism. This Haemophilus influenzae (strain ATCC 51907 / DSM 11121 / KW20 / Rd) protein is Galactose-1-phosphate uridylyltransferase (galT).